Reading from the N-terminus, the 422-residue chain is Serine hydroxymethyltransferase (422 aa).

(6S)-5,6,7,8-tetrahydrofolate-binding positions include Leu118 and 122 to 124 (GHL). An N6-(pyridoxal phosphate)lysine modification is found at Lys227. Residues Glu243 and 351–353 (SPF) each bind (6S)-5,6,7,8-tetrahydrofolate.

The protein belongs to the SHMT family. Homodimer. Pyridoxal 5'-phosphate serves as cofactor.

It localises to the cytoplasm. It carries out the reaction (6R)-5,10-methylene-5,6,7,8-tetrahydrofolate + glycine + H2O = (6S)-5,6,7,8-tetrahydrofolate + L-serine. It participates in one-carbon metabolism; tetrahydrofolate interconversion. It functions in the pathway amino-acid biosynthesis; glycine biosynthesis; glycine from L-serine: step 1/1. In terms of biological role, catalyzes the reversible interconversion of serine and glycine with tetrahydrofolate (THF) serving as the one-carbon carrier. This reaction serves as the major source of one-carbon groups required for the biosynthesis of purines, thymidylate, methionine, and other important biomolecules. Also exhibits THF-independent aldolase activity toward beta-hydroxyamino acids, producing glycine and aldehydes, via a retro-aldol mechanism. The protein is Serine hydroxymethyltransferase of Fervidobacterium nodosum (strain ATCC 35602 / DSM 5306 / Rt17-B1).